The following is a 308-amino-acid chain: Aspartate carbamoyltransferase catalytic subunit (308 aa).

Arginine 58 and threonine 59 together coordinate carbamoyl phosphate. Lysine 86 contacts L-aspartate. Positions 108, 136, and 139 each coordinate carbamoyl phosphate. The L-aspartate site is built by arginine 169 and arginine 222. The carbamoyl phosphate site is built by glycine 264 and proline 265.

It belongs to the aspartate/ornithine carbamoyltransferase superfamily. ATCase family. As to quaternary structure, heterododecamer (2C3:3R2) of six catalytic PyrB chains organized as two trimers (C3), and six regulatory PyrI chains organized as three dimers (R2).

It catalyses the reaction carbamoyl phosphate + L-aspartate = N-carbamoyl-L-aspartate + phosphate + H(+). Its pathway is pyrimidine metabolism; UMP biosynthesis via de novo pathway; (S)-dihydroorotate from bicarbonate: step 2/3. Catalyzes the condensation of carbamoyl phosphate and aspartate to form carbamoyl aspartate and inorganic phosphate, the committed step in the de novo pyrimidine nucleotide biosynthesis pathway. The chain is Aspartate carbamoyltransferase catalytic subunit from Campylobacter hominis (strain ATCC BAA-381 / DSM 21671 / CCUG 45161 / LMG 19568 / NCTC 13146 / CH001A).